We begin with the raw amino-acid sequence, 347 residues long: F-box protein At2g14500 (347 aa).

Residues 6–52 (PLTLSELPHDLLRNIFNRLSFADFHRATWNSISKQTAPPKTKSPWLI) enclose the F-box domain.

The protein is F-box protein At2g14500 of Arabidopsis thaliana (Mouse-ear cress).